The chain runs to 707 residues: Polyribonucleotide nucleotidyltransferase (707 aa).

2 residues coordinate Mg(2+): Asp486 and Asp492. One can recognise a KH domain in the interval 553-612 (PRIHTIKINPEKIKDVIGKGGSVIRALTEETGTTIEIEDDGTVKIAATDGDKAKHAIRRI). The S1 motif domain maps to 622 to 690 (GRIYQGKVTR…RQGRVRLSIK (69 aa)).

This sequence belongs to the polyribonucleotide nucleotidyltransferase family. In terms of assembly, component of the RNA degradosome, which is a multiprotein complex involved in RNA processing and mRNA degradation. The cofactor is Mg(2+).

It localises to the cytoplasm. The enzyme catalyses RNA(n+1) + phosphate = RNA(n) + a ribonucleoside 5'-diphosphate. In terms of biological role, involved in mRNA degradation. Catalyzes the phosphorolysis of single-stranded polyribonucleotides processively in the 3'- to 5'-direction. This chain is Polyribonucleotide nucleotidyltransferase, found in Edwardsiella ictaluri (strain 93-146).